Consider the following 378-residue polypeptide: tRNA-specific 2-thiouridylase MnmA (378 aa).

Residues 9–16 (GVSGGVDS) and methionine 35 each bind ATP. The segment at 94 to 96 (NPD) is interaction with target base in tRNA. Cysteine 99 acts as the Nucleophile in catalysis. Residues cysteine 99 and cysteine 195 are joined by a disulfide bond. Glycine 123 serves as a coordination point for ATP. The segment at 145–147 (KDQ) is interaction with tRNA. Cysteine 195 acts as the Cysteine persulfide intermediate in catalysis. An interaction with tRNA region spans residues 307-308 (RY).

The protein belongs to the MnmA/TRMU family.

It is found in the cytoplasm. It carries out the reaction S-sulfanyl-L-cysteinyl-[protein] + uridine(34) in tRNA + AH2 + ATP = 2-thiouridine(34) in tRNA + L-cysteinyl-[protein] + A + AMP + diphosphate + H(+). In terms of biological role, catalyzes the 2-thiolation of uridine at the wobble position (U34) of tRNA, leading to the formation of s(2)U34. This chain is tRNA-specific 2-thiouridylase MnmA, found in Xanthomonas axonopodis pv. citri (strain 306).